The sequence spans 696 residues: DNA-directed RNA polymerase subunit beta' (696 aa).

Residues Cys76, Cys78, Cys94, and Cys97 each contribute to the Zn(2+) site. Mg(2+) is bound by residues Asp496, Asp498, and Asp500.

It belongs to the RNA polymerase beta' chain family. RpoC1 subfamily. In terms of assembly, in plastids the minimal PEP RNA polymerase catalytic core is composed of four subunits: alpha, beta, beta', and beta''. When a (nuclear-encoded) sigma factor is associated with the core the holoenzyme is formed, which can initiate transcription. Requires Mg(2+) as cofactor. Zn(2+) serves as cofactor.

The protein localises to the plastid. The protein resides in the chloroplast. It carries out the reaction RNA(n) + a ribonucleoside 5'-triphosphate = RNA(n+1) + diphosphate. In terms of biological role, DNA-dependent RNA polymerase catalyzes the transcription of DNA into RNA using the four ribonucleoside triphosphates as substrates. The protein is DNA-directed RNA polymerase subunit beta' of Guizotia abyssinica (Niger).